Reading from the N-terminus, the 487-residue chain is GTPase Der (487 aa).

2 EngA-type G domains span residues 3–166 and 193–366; these read PVIA…PRDA and IKIA…KSAV. GTP is bound by residues 9–16, 56–60, 118–121, 199–206, 246–250, and 311–314; these read GRPNVGKS, DTGGI, NKID, DTAGV, and NKWD. The KH-like domain occupies 367-451; it reads TRWPTSRLTQ…PIRIEYKGGE (85 aa). Basic and acidic residues predominate over residues 448 to 461; that stretch reads KGGENPYEGKKNTL. The disordered stretch occupies residues 448–487; sequence KGGENPYEGKKNTLTDRQVNKKRRLMSHHKKAEKKRRDKR. Residues 467–487 show a composition bias toward basic residues; the sequence is NKKRRLMSHHKKAEKKRRDKR.

Belongs to the TRAFAC class TrmE-Era-EngA-EngB-Septin-like GTPase superfamily. EngA (Der) GTPase family. Associates with the 50S ribosomal subunit.

Functionally, GTPase that plays an essential role in the late steps of ribosome biogenesis. The protein is GTPase Der of Pseudomonas putida (strain W619).